The chain runs to 97 residues: Integration host factor subunit beta (97 aa).

This sequence belongs to the bacterial histone-like protein family. In terms of assembly, heterodimer of an alpha and a beta chain.

Functionally, this protein is one of the two subunits of integration host factor, a specific DNA-binding protein that functions in genetic recombination as well as in transcriptional and translational control. In Buchnera aphidicola subsp. Cinara cedri (strain Cc), this protein is Integration host factor subunit beta.